A 490-amino-acid chain; its full sequence is MYLVVCWGRVTGNMISTRHCFSRCKSRSVRVIKATAMLFVAAMLFLALHMNFSHEASQQNLHRAAPISSPTTISRSTVQIRNATHDFLPASSTPMKDELIETESEFVDGFQRNEVIACSDTSEEFRTDSKRITLVNSQSGVPCPIRPPALAGRFVPSKKSSTYHELAAMFPDVQDGGHYTPRMCTPAEKTAIIIPYRNRCRHLYTLLPNLIPMLMRQNVDFTIFVIEQTTPETFNKGILFNAGYLEALKVDNYDCFILHDVDMIPIDDRNMYRCNKMGPVHFSPGVNKFKYKLFYSGLFGGVVGFTREQFRLINGASNLYFGWGGEDDDLRNRAVHMKLPLLRKTLAHGLYDMVSHVEAGWNVNPHSKGAHSLYDMLNKALGVQAGWNVHPNSKWPLRLFDSVNHAPAEGAGWNVNPDRFKIYSTSRQRQHVDGINSLVYNVTWYRTSPLYTWVGVGFNKTVITNSIPEDLRIGPEADNTYLTGNFTIIS.

Residues 1-30 (MYLVVCWGRVTGNMISTRHCFSRCKSRSVR) are Cytoplasmic-facing. A helical; Signal-anchor for type II membrane protein membrane pass occupies residues 31-50 (VIKATAMLFVAAMLFLALHM). 5 N-linked (GlcNAc...) asparagine glycosylation sites follow: N51, N82, N441, N459, and N485. The Lumenal portion of the chain corresponds to 51–490 (NFSHEASQQN…YLTGNFTIIS (440 aa)).

Belongs to the glycosyltransferase 7 family.

It is found in the golgi apparatus membrane. It carries out the reaction an N-acetyl-beta-D-glucosaminyl derivative + UDP-N-acetyl-alpha-D-glucosamine = an N-acetyl-beta-D-glucosaminyl-(1-&gt;4)-N-acetyl-beta-D-glucosaminyl derivative + UDP + H(+). It participates in protein modification; protein glycosylation. This Lymnaea stagnalis (Great pond snail) protein is Beta-N-acetyl-D-glucosaminide beta-1,4-N-acetylglucosaminyl-transferase (GNT).